A 100-amino-acid chain; its full sequence is Small ribosomal subunit protein uS14c (100 aa).

The protein belongs to the universal ribosomal protein uS14 family. In terms of assembly, part of the 30S ribosomal subunit.

The protein localises to the plastid. Binds 16S rRNA, required for the assembly of 30S particles. In Epifagus virginiana (Beechdrops), this protein is Small ribosomal subunit protein uS14c.